The chain runs to 395 residues: RNA ligase 1 (395 aa).

ATP is bound by residues tyrosine 48, arginine 65, and lysine 83. The N6-AMP-lysine intermediate role is filled by lysine 113. ATP-binding residues include glutamate 173, lysine 255, and lysine 257. Aspartate 285 provides a ligand contact to Mg(2+).

It depends on Mg(2+) as a cofactor. Mn(2+) serves as cofactor.

The enzyme catalyses ATP + (ribonucleotide)n-3'-hydroxyl + 5'-phospho-(ribonucleotide)m = (ribonucleotide)n+m + AMP + diphosphate.. RNA ligase that ligates single-stranded nucleic acids in an ATP-dependent manner. Catalyzes both inter- and intra-molecular single-stranded DNA (ssDNA) ligation to &gt;50% completion in a matter of hours at an elevated temperature, although favoring intra-molecular ligation on RNA and single-stranded DNA substrates. Is able to catalyze the adenylation reaction of ssDNA 3'-terminal phosphate (ssDNA 3'p) to 3'-adenylated DNA (ssDNA 3'pp5'A). Does not have significant 3'-adenylation activity with a 3'-phosphorylated nicked dsDNA substrate. The chain is RNA ligase 1 from Thermus scotoductus.